The primary structure comprises 685 residues: Glycine--tRNA ligase beta subunit (685 aa).

It belongs to the class-II aminoacyl-tRNA synthetase family. Tetramer of two alpha and two beta subunits.

Its subcellular location is the cytoplasm. The enzyme catalyses tRNA(Gly) + glycine + ATP = glycyl-tRNA(Gly) + AMP + diphosphate. The sequence is that of Glycine--tRNA ligase beta subunit from Leuconostoc mesenteroides subsp. mesenteroides (strain ATCC 8293 / DSM 20343 / BCRC 11652 / CCM 1803 / JCM 6124 / NCDO 523 / NBRC 100496 / NCIMB 8023 / NCTC 12954 / NRRL B-1118 / 37Y).